Consider the following 115-residue polypeptide: Putative HNH nuclease YajD (115 aa).

The HNH domain occupies 27-75 (CGRCSREFVYSNLRELTVHHIDHDHTNNPEDGSNWELLCLYCHDHEHSK).

This sequence belongs to the HNH nuclease family.

The chain is Putative HNH nuclease YajD (yajD) from Salmonella typhi.